Consider the following 376-residue polypeptide: E3 ubiquitin-protein ligase RNF34 (376 aa).

The FYVE-type zinc-finger motif lies at 56 to 107 (EGPNIVCKACGLSFSVFRKKHVCCDCKKDFCSLCSVSQENLRRCSTCHLLQE). An SAP 1 domain is found at 115–134 (LMRLKVKDLRQYLLLRNIPT). At Ser-169 the chain carries Phosphoserine. The disordered stretch occupies residues 216–256 (IASANTDDDDDDDDDDDDDEDDDDEQEEEEQNPGLSKKKAR). Residues 221–246 (TDDDDDDDDDDDDDEDDDDEQEEEEQ) show a composition bias toward acidic residues. Phosphoserine is present on residues Ser-258 and Ser-260. In terms of domain architecture, SAP 2 spans 268 to 282 (VEGMSVRQLKEILAR). The RING-type zinc-finger motif lies at 329–364 (CRICMDAVIDCVLLECGHMVTCTKCGKRMSECPICR).

As to quaternary structure, interacts with CASP8 and CASP10. Interacts with p53/TP53; involved in p53/TP53 ubiquitination. Interacts (via RING-type zinc finger) with MDM2; the interaction stabilizes MDM2. Interacts (via RING-type zinc finger) with PPARGC1A. Interacts with NOD1. Post-translationally, autoubiquitinated (in vitro). In terms of processing, proteolytically cleaved by caspases upon induction of apoptosis by TNF.

It localises to the cell membrane. The protein localises to the endomembrane system. The protein resides in the nucleus. It is found in the nucleus speckle. Its subcellular location is the cytoplasm. It localises to the cytosol. It carries out the reaction S-ubiquitinyl-[E2 ubiquitin-conjugating enzyme]-L-cysteine + [acceptor protein]-L-lysine = [E2 ubiquitin-conjugating enzyme]-L-cysteine + N(6)-ubiquitinyl-[acceptor protein]-L-lysine.. The protein operates within protein modification; protein ubiquitination. In terms of biological role, E3 ubiquitin-protein ligase that regulates several biological processes through the ubiquitin-mediated proteasomal degradation of various target proteins. Ubiquitinates the caspases CASP8 and CASP10, promoting their proteasomal degradation, to negatively regulate cell death downstream of death domain receptors in the extrinsic pathway of apoptosis. May mediate 'Lys-48'-linked polyubiquitination of RIPK1 and its subsequent proteasomal degradation thereby indirectly regulating the tumor necrosis factor-mediated signaling pathway. Negatively regulates p53/TP53 through its direct ubiquitination and targeting to proteasomal degradation. Indirectly, may also negatively regulate p53/TP53 through ubiquitination and degradation of SFN. Mediates PPARGC1A proteasomal degradation probably through ubiquitination thereby indirectly regulating the metabolism of brown fat cells. Possibly involved in innate immunity, through 'Lys-48'-linked polyubiquitination of NOD1 and its subsequent proteasomal degradation. This is E3 ubiquitin-protein ligase RNF34 from Mus musculus (Mouse).